A 356-amino-acid polypeptide reads, in one-letter code: MACLTDLVNLNLSDTTEKIIAEYIWIGGSGMDLRSKARTLSGPVTDPSKLPKWNYDGSSTGQAPGEDSEVILYPQAIFKDPFRRGNNILVMCDCYTPAGEPIPTNKRYNAAKIFSSPEVAAEEPWYGIEQEYTLLQKDTNWPLGWPIGGFPGPQGPYYCGIGAEKSFGRDIVDAHYKACLYAGINISGINGEVMPGQWEFQVGPSVGISSGDQVWVARYILERITEIAGVVVTFDPKPIPGDWNGAGAHTNYSTESMRKEGGYEVIKAAIEKLKLRHREHIAAYGEGNDGRLTGRHETADINTFSWGVANRGASVRVGRETEQNGKGYFEDRRPASNMDPYVVTSMIAETTIIWKP.

Residues 19 to 99 (IIAEYIWIGG…VMCDCYTPAG (81 aa)) enclose the GS beta-grasp domain. The GS catalytic domain occupies 106-356 (KRYNAAKIFS…IAETTIIWKP (251 aa)).

Belongs to the glutamine synthetase family. In terms of assembly, homooctamer. As to expression, found in all the tissues examined with higher expression found in tissues of the root.

It localises to the cytoplasm. It catalyses the reaction L-glutamate + NH4(+) + ATP = L-glutamine + ADP + phosphate + H(+). Its function is as follows. Plays a role in the flow of nitrogen into nitrogenous organic compounds. The protein is Glutamine synthetase root isozyme 3 (GLN4) of Zea mays (Maize).